The chain runs to 567 residues: Septation ring formation regulator EzrA (567 aa).

At 1–2 (MG) the chain is on the extracellular side. Residues 3-21 (MAWIVLLLGAGAIIYNHVY) traverse the membrane as a helical segment. Residues 22 to 567 (RKRMYREIDR…LWQEDNSREQ (546 aa)) lie on the Cytoplasmic side of the membrane. Coiled-coil stretches lie at residues 98-159 (YRQA…AYRY) and 251-497 (HMER…IEQA).

Belongs to the EzrA family.

The protein localises to the cell membrane. Functionally, negative regulator of FtsZ ring formation; modulates the frequency and position of FtsZ ring formation. Inhibits FtsZ ring formation at polar sites. Interacts either with FtsZ or with one of its binding partners to promote depolymerization. This chain is Septation ring formation regulator EzrA, found in Geobacillus kaustophilus (strain HTA426).